Consider the following 250-residue polypeptide: Beta-lactamase HcpA (250 aa).

An N-terminal signal peptide occupies residues 1–25 (MLGSVKKTLFGVLCLGALCLRGLMA). TPR repeat units lie at residues 29 to 62 (AKELVSLGIESVKKQDFAQAKAHFEKACELKEGF), 67 to 98 (LGAFYEEGKGVGKDLKKAIQFYTKGCELNDGY), 100 to 133 (CRLLGNLYYNGQGVSKDAKKASQYYSKSCELNHA), 134 to 169 (EGCTVLGSLHHYGVGTPKDLRKALDLYEKACDLKDS), and 170 to 202 (PGCINAGYMYGVAKNFKEAIVRYSKACELKDGR). Disulfide bonds link Cys-56–Cys-64, Cys-92–Cys-100, Cys-128–Cys-136, Cys-164–Cys-172, Cys-196–Cys-204, and Cys-232–Cys-240.

It belongs to the hcp beta-lactamase family.

It is found in the secreted. The catalysed reaction is a beta-lactam + H2O = a substituted beta-amino acid. Inhibited by cloxacillin and oxacillin but not by ACA derivatives or metal chelators. Slowly hydrolyzes 6-aminopenicillinic acid and 7-aminocephalosporanic acid (ACA) derivatives. May be involved in the synthesis of the cell wall peptidoglycan. The chain is Beta-lactamase HcpA (hcpA) from Helicobacter pylori (strain J99 / ATCC 700824) (Campylobacter pylori J99).